Here is a 581-residue protein sequence, read N- to C-terminus: Arginine--tRNA ligase (581 aa).

The short motif at 126–136 (PNLAKEMHVGH) is the 'HIGH' region element.

It belongs to the class-I aminoacyl-tRNA synthetase family. As to quaternary structure, monomer.

It is found in the cytoplasm. The catalysed reaction is tRNA(Arg) + L-arginine + ATP = L-arginyl-tRNA(Arg) + AMP + diphosphate. In Shewanella sediminis (strain HAW-EB3), this protein is Arginine--tRNA ligase.